The following is a 568-amino-acid chain: DNA ligase 2 (568 aa).

Glu254 provides a ligand contact to ATP. Lys256 functions as the N6-AMP-lysine intermediate in the catalytic mechanism. ATP contacts are provided by Arg261, Arg276, Glu306, Phe346, Arg425, and Lys431.

The protein belongs to the ATP-dependent DNA ligase family. It depends on Mg(2+) as a cofactor.

It carries out the reaction ATP + (deoxyribonucleotide)n-3'-hydroxyl + 5'-phospho-(deoxyribonucleotide)m = (deoxyribonucleotide)n+m + AMP + diphosphate.. Its function is as follows. DNA ligase that seals nicks in double-stranded DNA during DNA replication, DNA recombination and DNA repair. This is DNA ligase 2 from Methanosarcina mazei (strain ATCC BAA-159 / DSM 3647 / Goe1 / Go1 / JCM 11833 / OCM 88) (Methanosarcina frisia).